The primary structure comprises 323 residues: Phosphatidylglycerol--prolipoprotein diacylglyceryl transferase (323 aa).

3 helical membrane passes run 15–35 (VIQGIPITWYSLSYIFIILIS), 58–78 (FMFSLVLGAILGGRLASTLVY), and 106–126 (GMAIHGGFLGAIIAPLITINT). Residue arginine 156 coordinates a 1,2-diacyl-sn-glycero-3-phospho-(1'-sn-glycerol). A run of 2 helical transmembrane segments spans residues 242–262 (GFIFGVYIMLYAFFRFFIEYL) and 289–309 (ISMGQILSLALMLSGLIWIIV).

This sequence belongs to the Lgt family.

The protein localises to the cell inner membrane. The catalysed reaction is L-cysteinyl-[prolipoprotein] + a 1,2-diacyl-sn-glycero-3-phospho-(1'-sn-glycerol) = an S-1,2-diacyl-sn-glyceryl-L-cysteinyl-[prolipoprotein] + sn-glycerol 1-phosphate + H(+). It functions in the pathway protein modification; lipoprotein biosynthesis (diacylglyceryl transfer). Functionally, catalyzes the transfer of the diacylglyceryl group from phosphatidylglycerol to the sulfhydryl group of the N-terminal cysteine of a prolipoprotein, the first step in the formation of mature lipoproteins. This Borreliella afzelii (strain PKo) (Borrelia afzelii) protein is Phosphatidylglycerol--prolipoprotein diacylglyceryl transferase.